The following is a 170-amino-acid chain: Peptide deformylase (170 aa).

Residues C91 and H133 each coordinate Fe cation. The active site involves E134. H137 provides a ligand contact to Fe cation.

The protein belongs to the polypeptide deformylase family. Requires Fe(2+) as cofactor.

The enzyme catalyses N-terminal N-formyl-L-methionyl-[peptide] + H2O = N-terminal L-methionyl-[peptide] + formate. In terms of biological role, removes the formyl group from the N-terminal Met of newly synthesized proteins. Requires at least a dipeptide for an efficient rate of reaction. N-terminal L-methionine is a prerequisite for activity but the enzyme has broad specificity at other positions. The sequence is that of Peptide deformylase from Actinobacillus pleuropneumoniae serotype 7 (strain AP76).